The sequence spans 143 residues: Ribosome-binding factor A (143 aa).

The disordered stretch occupies residues 1 to 20; that stretch reads MRFMGKNKFHTGPGPSQRQL.

The protein belongs to the RbfA family. In terms of assembly, monomer. Binds 30S ribosomal subunits, but not 50S ribosomal subunits or 70S ribosomes.

Its subcellular location is the cytoplasm. In terms of biological role, one of several proteins that assist in the late maturation steps of the functional core of the 30S ribosomal subunit. Associates with free 30S ribosomal subunits (but not with 30S subunits that are part of 70S ribosomes or polysomes). Required for efficient processing of 16S rRNA. May interact with the 5'-terminal helix region of 16S rRNA. The polypeptide is Ribosome-binding factor A (Roseobacter denitrificans (strain ATCC 33942 / OCh 114) (Erythrobacter sp. (strain OCh 114))).